We begin with the raw amino-acid sequence, 196 residues long: Lipoprotein signal peptidase (196 aa).

Positions 1-24 (MAEAERIIGMPENPDVDGTDEGGS) are disordered. 3 helical membrane-spanning segments follow: residues 40–60 (ILAL…SKML), 92–112 (IGEA…VVIF), and 118–138 (LYSL…LGNL). Active-site residues include aspartate 155 and aspartate 169. The helical transmembrane segment at 164–184 (VFNLADSAIVCGGILIVILSF) threads the bilayer.

This sequence belongs to the peptidase A8 family.

The protein resides in the cell membrane. The enzyme catalyses Release of signal peptides from bacterial membrane prolipoproteins. Hydrolyzes -Xaa-Yaa-Zaa-|-(S,diacylglyceryl)Cys-, in which Xaa is hydrophobic (preferably Leu), and Yaa (Ala or Ser) and Zaa (Gly or Ala) have small, neutral side chains.. The protein operates within protein modification; lipoprotein biosynthesis (signal peptide cleavage). In terms of biological role, this protein specifically catalyzes the removal of signal peptides from prolipoproteins. In Streptomyces griseus subsp. griseus (strain JCM 4626 / CBS 651.72 / NBRC 13350 / KCC S-0626 / ISP 5235), this protein is Lipoprotein signal peptidase.